The chain runs to 480 residues: MSADAYHPPTTSPRLETLDVLSIGMSLDVFRQGQVWKALQEQNAAQAEALHVGSILPMDPKKYPTSADDKDMAYEKRQADALELGLKNFLEKWPIPTVTVVRGWDPSTPNLRFTPEETRESLSVKVNDLRVPAGLHWHRIANLQDGIICNDTPEGVLEALFSLFERNPDLPAVLVYANEGISMAGALSSRDVTLKSLGAVSGPRIPGTLTDAMVALIVGRPERVDWLRQFAPYTKVNENRIDPEFRGWGWRKPPVEFRPTPFIPQPWTERALEQWDALPVLARLHRPVSVPLTHPDTGERLKREALTAQLAAAWKTASAGLRPAPARLFYDGGLNATPLAELTPALGAAQSSLDLLDSRESYDLTQRLGDTGAASPFVGITLATMASYLNGDSSMVMPLRRKDQATLIGISSPTPGKKPVHDPFGVDLLPQTASGDGPPPSADPVAPASRLTTRLPPGEDYALEEFLSSLKPSTDWQDDL.

The interval 410 to 458 is disordered; it reads ISSPTPGKKPVHDPFGVDLLPQTASGDGPPPSADPVAPASRLTTRLPPG.

As to quaternary structure, interacts with the Tle3 toxin on one side and with the H2-T6SS component VgrG2b on the other side.

Its subcellular location is the cytoplasm. Its function is as follows. Adapter protein that targets and loads the Tle3 toxin onto the H2 type VI secretion system (H2-T6SS) machinery through an interaction with the TTR domain of VgrG2b. Seems specific for Tle3. The sequence is that of Type VI lipase adapter protein Tla3 from Pseudomonas aeruginosa (strain ATCC 15692 / DSM 22644 / CIP 104116 / JCM 14847 / LMG 12228 / 1C / PRS 101 / PAO1).